The sequence spans 686 residues: Mitochondrial Rho GTPase 1 (686 aa).

Residues 1-648 (MPRRDLVRIV…PAQRIRVVAR (648 aa)) lie on the Cytoplasmic side of the membrane. Residues 4–172 (RDLVRIVLVG…FYFAQKAVLH (169 aa)) form the Miro 1 domain. GTP contacts are provided by residues 13-20 (GDDGVGKS), 59-63 (DTSSN), and 117-120 (NKID). EF-hand domains lie at 188 to 223 (KCLE…CFST) and 341 to 376 (LGNQ…SPGN). Residues aspartate 201, aspartate 203, aspartate 205, glutamate 212, aspartate 354, aspartate 356, aspartate 358, and glutamate 365 each coordinate Ca(2+). The region spanning 455–624 (RNVFLCYVLG…WVAITRVALD (170 aa)) is the Miro 2 domain. GTP is bound by residues 464-471 (GATGSGKT), 506-510 (EMEGV), and 574-577 (TKSD). The helical; Anchor for type IV membrane protein transmembrane segment at 649-665 (WGLAATTISAIVAVWMK) threads the bilayer. The Mitochondrial intermembrane portion of the chain corresponds to 666–686 (WQGYSFKGIWGWMAKFAGLRT).

It belongs to the mitochondrial Rho GTPase family.

Its subcellular location is the mitochondrion outer membrane. Functionally, mitochondrial GTPase involved in mitochondrial trafficking. Probably involved in control of anterograde transport of mitochondria and their subcellular distribution. The chain is Mitochondrial Rho GTPase 1 (GEM1) from Cryptococcus neoformans var. neoformans serotype D (strain B-3501A) (Filobasidiella neoformans).